The sequence spans 1003 residues: Serine/threonine-protein kinase spk-1 (1003 aa).

3 disordered regions span residues 92–112, 169–309, and 337–408; these read NSTN…TQNE, NEND…SATS, and RPSI…KRGG. Positions 202–211 are enriched in acidic residues; the sequence is SDEEDVESQD. Residues 248–265 are compositionally biased toward basic and acidic residues; the sequence is SNDDKNEKDVLVDEDTSK. Residues 285–300 are compositionally biased toward low complexity; the sequence is TIDSSVSSSTSSSSTG. Positions 346 to 359 are enriched in basic and acidic residues; sequence KKTEVNANEERLDD. One can recognise a Protein kinase domain in the interval 422 to 904; sequence YHVIRKLGWG…AKIALKHPFL (483 aa). ATP contacts are provided by residues 428–436 and Lys451; that span reads LGWGHFSTV. The active-site Proton acceptor is the Asp555. Positions 927–1003 are disordered; it reads DGLIPEPFDG…DIERFQLDLQ (77 aa). Over residues 936–953 the composition is skewed to basic and acidic residues; the sequence is GNEHQEVYRDENDSRSAS. Over residues 954-964 the composition is skewed to low complexity; it reads ERSANSRSAGG. Polar residues predominate over residues 983 to 992; that stretch reads VITNNETTDI. Residues 994–1003 show a composition bias toward basic and acidic residues; it reads DIERFQLDLQ.

This sequence belongs to the protein kinase superfamily. Ser/Thr protein kinase family. In terms of assembly, interacts with rsp-3. As to expression, predominantly coexpressed with rsp-3 in adult hermaphrodite germlines.

The enzyme catalyses L-seryl-[protein] + ATP = O-phospho-L-seryl-[protein] + ADP + H(+). It carries out the reaction L-threonyl-[protein] + ATP = O-phospho-L-threonyl-[protein] + ADP + H(+). Required for embryogenesis and germline development in both adult hermaphrodites and males. SR-protein kinase (SRPK) that binds directly to and phosphorylates the RS domain of rsp-3/CeSF2 in vitro. The protein is Serine/threonine-protein kinase spk-1 (spk-1) of Caenorhabditis elegans.